The following is an 87-amino-acid chain: HssA/B-like protein 31 (87 aa).

The protein belongs to the hssA/B family.

This is HssA/B-like protein 31 (hssl31) from Dictyostelium discoideum (Social amoeba).